The following is a 197-amino-acid chain: Holliday junction branch migration complex subunit RuvA (197 aa).

Residues 1–65 (MISQVRGTIM…EDAWHLYGFA (65 aa)) form a domain I region. The interval 66–140 (HAYERAVFQK…DKIDAVGPAP (75 aa)) is domain II. Residues 140–144 (PATGT) form a flexible linker region. Positions 145 to 197 (APSPLGDDAVRALIALGYNQTEADRAVRAVVESGAPKDVSSLVRGALSRLTAK) are domain III.

The protein belongs to the RuvA family. As to quaternary structure, homotetramer. Forms an RuvA(8)-RuvB(12)-Holliday junction (HJ) complex. HJ DNA is sandwiched between 2 RuvA tetramers; dsDNA enters through RuvA and exits via RuvB. An RuvB hexamer assembles on each DNA strand where it exits the tetramer. Each RuvB hexamer is contacted by two RuvA subunits (via domain III) on 2 adjacent RuvB subunits; this complex drives branch migration. In the full resolvosome a probable DNA-RuvA(4)-RuvB(12)-RuvC(2) complex forms which resolves the HJ.

It localises to the cytoplasm. Its function is as follows. The RuvA-RuvB-RuvC complex processes Holliday junction (HJ) DNA during genetic recombination and DNA repair, while the RuvA-RuvB complex plays an important role in the rescue of blocked DNA replication forks via replication fork reversal (RFR). RuvA specifically binds to HJ cruciform DNA, conferring on it an open structure. The RuvB hexamer acts as an ATP-dependent pump, pulling dsDNA into and through the RuvAB complex. HJ branch migration allows RuvC to scan DNA until it finds its consensus sequence, where it cleaves and resolves the cruciform DNA. The sequence is that of Holliday junction branch migration complex subunit RuvA from Gemmatimonas aurantiaca (strain DSM 14586 / JCM 11422 / NBRC 100505 / T-27).